The primary structure comprises 324 residues: tRNA pseudouridine synthase B (324 aa).

Asp49 (nucleophile) is an active-site residue. The tract at residues 87 to 107 is disordered; it reads RSTDDLEGQPTKTSDKRPSRE.

Belongs to the pseudouridine synthase TruB family. Type 1 subfamily.

The catalysed reaction is uridine(55) in tRNA = pseudouridine(55) in tRNA. Functionally, responsible for synthesis of pseudouridine from uracil-55 in the psi GC loop of transfer RNAs. This is tRNA pseudouridine synthase B from Brucella canis (strain ATCC 23365 / NCTC 10854 / RM-666).